A 960-amino-acid polypeptide reads, in one-letter code: Endosome/lysosome-associated apoptosis and autophagy regulator family member 2 (960 aa).

The interval 1 to 26 (MLFLRPGPARGRGRGRPARAPHSGLS) is disordered. The first 44 residues, 1-44 (MLFLRPGPARGRGRGRPARAPHSGLSPPWSPAWICCWALAGCQA), serve as a signal peptide directing secretion. The Extracellular segment spans residues 45–860 (AWAGAGDLPS…TCETVDFWLK (816 aa)). N-linked (GlcNAc...) asparagine glycosylation is present at asparagine 171. 3 disulfides stabilise this stretch: cysteine 295/cysteine 312, cysteine 325/cysteine 348, and cysteine 328/cysteine 360. Residues asparagine 407 and asparagine 622 are each glycosylated (N-linked (GlcNAc...) asparagine). The MRH domain maps to 597-808 (PTCPYIRSMA…LWESVEACPL (212 aa)). Disulfide bonds link cysteine 599–cysteine 651, cysteine 661–cysteine 689, cysteine 758–cysteine 794, and cysteine 770–cysteine 806. A helical transmembrane segment spans residues 861-881 (VGAGVGAFTAVLLVALTCYFW). The Cytoplasmic portion of the chain corresponds to 882–960 (KKNQKLEYKY…QLKSSRSPNI (79 aa)). A Phosphoserine modification is found at serine 949.

This sequence belongs to the ELAPOR family.

It is found in the cell membrane. Functionally, functions as a regulator of the BMP signaling pathway and may be involved in epidermal differentiation. The chain is Endosome/lysosome-associated apoptosis and autophagy regulator family member 2 from Bos taurus (Bovine).